Here is an 89-residue protein sequence, read N- to C-terminus: Small ribosomal subunit protein uS15 (89 aa).

The protein belongs to the universal ribosomal protein uS15 family. Part of the 30S ribosomal subunit. Forms a bridge to the 50S subunit in the 70S ribosome, contacting the 23S rRNA.

Functionally, one of the primary rRNA binding proteins, it binds directly to 16S rRNA where it helps nucleate assembly of the platform of the 30S subunit by binding and bridging several RNA helices of the 16S rRNA. In terms of biological role, forms an intersubunit bridge (bridge B4) with the 23S rRNA of the 50S subunit in the ribosome. The sequence is that of Small ribosomal subunit protein uS15 from Bordetella parapertussis (strain 12822 / ATCC BAA-587 / NCTC 13253).